Here is a 144-residue protein sequence, read N- to C-terminus: MTSVFKDSRRDLRERAFQTLFSLETGGEFIDAAHFAYGYDKTVSEDKVLEVPIFLLNLVNGVVDHKDELDTLISSHLKSGWSLERLTLVDKSLLRLGLYEIKYFDETPDRVALNEIIEIAKKYSDETSAKFVNGLLSQFITNEN.

It belongs to the NusB family.

Involved in transcription antitermination. Required for transcription of ribosomal RNA (rRNA) genes. Binds specifically to the boxA antiterminator sequence of the ribosomal RNA (rrn) operons. This is Transcription antitermination protein NusB from Streptococcus agalactiae serotype Ia (strain ATCC 27591 / A909 / CDC SS700).